The chain runs to 519 residues: Membrane-bound glycerophospholipid O-acyltransferase 2 (519 aa).

6 helical membrane passes run 22–42 (PIDQ…AVWF), 61–81 (TLLG…HFLV), 88–108 (CIMI…FALG), 184–204 (FMGI…FIEG), 236–256 (LLVC…LPVE), and 288–305 (YFAW…GFGF). Active-site residues include asparagine 341 and histidine 372. The next 3 helical transmembrane spans lie at 365-385 (FFLS…FLTG), 415-435 (IITW…FVLL), and 443-463 (FYRS…LLLP).

The protein belongs to the membrane-bound acyltransferase family.

It localises to the endoplasmic reticulum membrane. It carries out the reaction a 1-acyl-sn-glycero-3-phosphocholine + an acyl-CoA = a 1,2-diacyl-sn-glycero-3-phosphocholine + CoA. The catalysed reaction is a 1-acyl-sn-glycero-3-phosphoethanolamine + an acyl-CoA = a 1,2-diacyl-sn-glycero-3-phosphoethanolamine + CoA. It catalyses the reaction a 1-acyl-sn-glycero-3-phosphate + an acyl-CoA = a 1,2-diacyl-sn-glycero-3-phosphate + CoA. The enzyme catalyses (9Z)-hexadecenoyl-CoA + 1-hexadecanoyl-sn-glycero-3-phosphocholine = 1-hexadecanoyl-2-(9Z-hexadecenoyl)-sn-glycero-3-phosphocholine + CoA. It carries out the reaction 1-hexadecanoyl-sn-glycero-3-phosphoethanolamine + (9Z)-octadecenoyl-CoA = 1-hexadecanoyl-2-(9Z-octadecenoyl)-sn-glycero-3-phosphoethanolamine + CoA. The catalysed reaction is 1-hexadecanoyl-sn-glycero-3-phosphoethanolamine + (9Z)-hexadecenoyl-CoA = 1-hexadecanoyl-2-(9Z)-hexadecenoyl-sn-glycero-3-phosphoethanolamine + CoA. It catalyses the reaction 1-(9Z-octadecenoyl)-sn-glycero-3-phospho-L-serine + hexadecanoyl-CoA = 1-(9Z)-octadecenoyl-2-hexadecanoyl-sn-glycero-3-phosphoserine + CoA. The enzyme catalyses (9Z,12Z)-octadecadienoyl-CoA + 1-hexadecanoyl-sn-glycero-3-phosphocholine = 1-hexadecanoyl-2-(9Z,12Z-octadecadienoyl)-sn-glycero-3-phosphocholine + CoA. It carries out the reaction 1-hexadecanoyl-sn-glycero-3-phosphocholine + (9Z)-octadecenoyl-CoA = 1-hexadecanoyl-2-(9Z-octadecenoyl)-sn-glycero-3-phosphocholine + CoA. The catalysed reaction is 1-hexadecanoyl-sn-glycero-3-phosphate + (9Z)-hexadecenoyl-CoA = 1-hexadecanoyl-2-[(9Z)-hexadec-9-enoyl]-sn-glycero-3-phosphate + CoA. It catalyses the reaction 1-hexadecanoyl-sn-glycero-3-phosphate + (9Z)-octadecenoyl-CoA = 1-hexadecanoyl-2-(9Z-octadecenoyl)-sn-glycero-3-phosphate + CoA. The enzyme catalyses a 1-O-(1Z-alkenyl)-sn-glycero-3-phosphocholine + (9Z)-octadecenoyl-CoA = 1-O-(1Z)-alkenyl-2-(9Z)-octadecenoyl-sn-glycero-3-phosphocholine + CoA. It carries out the reaction a 1-O-(1Z-alkenyl)-sn-glycero-3-phosphoethanolamine + (9Z)-octadecenoyl-CoA = 1-O-(1Z)-alkenyl-2-(9Z)-octadecenoyl-sn-glycero-3-phosphoethanolamine + CoA. The catalysed reaction is 1-octadecanoyl-sn-glycero-3-phosphoethanolamine + (9Z)-octadecenoyl-CoA = 1-octadecanoyl-2-(9Z-octadecenoyl)-sn-glycero-3-phosphoethanolamine + CoA. It catalyses the reaction 1-octadecanoyl-sn-glycero-3-phosphocholine + (9Z)-octadecenoyl-CoA = 1-octadecanoyl-2-(9Z-octadecenoyl)-sn-glycero-3-phosphocholine + CoA. The enzyme catalyses 1-(9Z-octadecenoyl)-sn-glycero-3-phosphoethanolamine + (9Z)-octadecenoyl-CoA = 1,2-di-(9Z-octadecenoyl)-sn-glycero-3-phosphoethanolamine + CoA. It participates in lipid metabolism; phospholipid metabolism. Its activity is regulated as follows. Partially inhibited by thimerosal. Functionally, acyltransferase which catalyzes the transfer of an acyl group from an acyl-CoA to a lysophospholipid leading to the production of a phospholipid and participates in the reacylation step of the phospholipid remodeling pathway also known as the Lands cycle. May catalyze preferentially the acylation of lysophosphatidylethanolamine (1-acyl-sn-glycero-3-phosphoethanolamine or LPE) and lysophosphatidic acid (LPA) and to a lesser extend lysophosphatidylcholine (LPC) and lysophosphatidylserine (LPS). Prefers oleoyl-CoA as the acyl donor. May be involved in chondrocyte differentiation. The sequence is that of Membrane-bound glycerophospholipid O-acyltransferase 2 from Rattus norvegicus (Rat).